A 416-amino-acid polypeptide reads, in one-letter code: 4-hydroxy-3-methylbut-2-en-1-yl diphosphate synthase (flavodoxin) (416 aa).

[4Fe-4S] cluster is bound by residues Cys-304, Cys-307, Cys-350, and Glu-357.

This sequence belongs to the IspG family. The cofactor is [4Fe-4S] cluster.

The catalysed reaction is (2E)-4-hydroxy-3-methylbut-2-enyl diphosphate + oxidized [flavodoxin] + H2O + 2 H(+) = 2-C-methyl-D-erythritol 2,4-cyclic diphosphate + reduced [flavodoxin]. It participates in isoprenoid biosynthesis; isopentenyl diphosphate biosynthesis via DXP pathway; isopentenyl diphosphate from 1-deoxy-D-xylulose 5-phosphate: step 5/6. Functionally, converts 2C-methyl-D-erythritol 2,4-cyclodiphosphate (ME-2,4cPP) into 1-hydroxy-2-methyl-2-(E)-butenyl 4-diphosphate. In Rhizobium etli (strain ATCC 51251 / DSM 11541 / JCM 21823 / NBRC 15573 / CFN 42), this protein is 4-hydroxy-3-methylbut-2-en-1-yl diphosphate synthase (flavodoxin).